Here is a 400-residue protein sequence, read N- to C-terminus: Tryptophan synthase beta chain (400 aa).

An N6-(pyridoxal phosphate)lysine modification is found at Lys-92.

This sequence belongs to the TrpB family. As to quaternary structure, tetramer of two alpha and two beta chains. Pyridoxal 5'-phosphate serves as cofactor.

The enzyme catalyses (1S,2R)-1-C-(indol-3-yl)glycerol 3-phosphate + L-serine = D-glyceraldehyde 3-phosphate + L-tryptophan + H2O. The protein operates within amino-acid biosynthesis; L-tryptophan biosynthesis; L-tryptophan from chorismate: step 5/5. In terms of biological role, the beta subunit is responsible for the synthesis of L-tryptophan from indole and L-serine. This chain is Tryptophan synthase beta chain, found in Neisseria gonorrhoeae.